Here is a 392-residue protein sequence, read N- to C-terminus: Heat-inducible transcription repressor HrcA (392 aa).

It belongs to the HrcA family.

In terms of biological role, negative regulator of class I heat shock genes (grpE-dnaK-dnaJ and groELS operons). Prevents heat-shock induction of these operons. The chain is Heat-inducible transcription repressor HrcA from Chlamydia muridarum (strain MoPn / Nigg).